A 482-amino-acid polypeptide reads, in one-letter code: Ubiquitin carboxyl-terminal hydrolase 6 (482 aa).

One can recognise a Ubiquitin-like domain in the interval 2–77 (PTVSVKWQKK…LMMMGTADEI (76 aa)). The USP domain occupies 104 to 478 (AGLVNLGNTC…MAYITMYKAR (375 aa)). The active-site Nucleophile is cysteine 113. The tract at residues 172–191 (SQFWMVLRKKYPQFSQLQNG) is calmodulin-binding. 2 stretches are compositionally biased toward basic and acidic residues: residues 350–361 (PRQKLREEEGKK) and 371–381 (GSKDSDVKMTD). A disordered region spans residues 350–407 (PRQKLREEEGKKLGLQTSAKSGSKDSDVKMTDAEASANGSGESSTVNPQEGTSSEKET). The span at 382-393 (AEASANGSGESS) shows a compositional bias: low complexity. Histidine 430 (proton acceptor) is an active-site residue.

This sequence belongs to the peptidase C19 family. Interacts with calmodulin (CaM).

It carries out the reaction Thiol-dependent hydrolysis of ester, thioester, amide, peptide and isopeptide bonds formed by the C-terminal Gly of ubiquitin (a 76-residue protein attached to proteins as an intracellular targeting signal).. In terms of biological role, recognizes and hydrolyzes the peptide bond at the C-terminal Gly of ubiquitin. Involved in the processing of poly-ubiquitin precursors as well as that of ubiquitinated proteins. The sequence is that of Ubiquitin carboxyl-terminal hydrolase 6 (UBP6) from Arabidopsis thaliana (Mouse-ear cress).